Reading from the N-terminus, the 71-residue chain is DNA-directed RNA polymerase subunit omega (71 aa).

Belongs to the RNA polymerase subunit omega family. The RNAP catalytic core consists of 2 alpha, 1 beta, 1 beta' and 1 omega subunit. When a sigma factor is associated with the core the holoenzyme is formed, which can initiate transcription.

It carries out the reaction RNA(n) + a ribonucleoside 5'-triphosphate = RNA(n+1) + diphosphate. Functionally, promotes RNA polymerase assembly. Latches the N- and C-terminal regions of the beta' subunit thereby facilitating its interaction with the beta and alpha subunits. This chain is DNA-directed RNA polymerase subunit omega, found in Azoarcus sp. (strain BH72).